Here is a 360-residue protein sequence, read N- to C-terminus: Phosphate acyltransferase (360 aa).

The protein belongs to the PlsX family. Homodimer. Probably interacts with PlsY.

The protein resides in the cytoplasm. It carries out the reaction a fatty acyl-[ACP] + phosphate = an acyl phosphate + holo-[ACP]. Its pathway is lipid metabolism; phospholipid metabolism. In terms of biological role, catalyzes the reversible formation of acyl-phosphate (acyl-PO(4)) from acyl-[acyl-carrier-protein] (acyl-ACP). This enzyme utilizes acyl-ACP as fatty acyl donor, but not acyl-CoA. This chain is Phosphate acyltransferase, found in Janthinobacterium sp. (strain Marseille) (Minibacterium massiliensis).